Reading from the N-terminus, the 187-residue chain is MLSHTEMKQGKRVLIDDQPWIIVKADFVKPGKGQAFTKIKVKNLMDGRVIERTFKSSDSVAKADVVDVEMQYLYNDGELYHFMNPATFEQVALSEKQVEECKKWLKENEVYEVTLWENRAINVVPPSFMILEITECEPGVRGDTVTGATKPAVVESGASIKVPLFVEIGARVKVDTRTGEYMERAKG.

It belongs to the elongation factor P family.

It localises to the cytoplasm. It participates in protein biosynthesis; polypeptide chain elongation. Its function is as follows. Involved in peptide bond synthesis. Stimulates efficient translation and peptide-bond synthesis on native or reconstituted 70S ribosomes in vitro. Probably functions indirectly by altering the affinity of the ribosome for aminoacyl-tRNA, thus increasing their reactivity as acceptors for peptidyl transferase. This Magnetococcus marinus (strain ATCC BAA-1437 / JCM 17883 / MC-1) protein is Elongation factor P.